We begin with the raw amino-acid sequence, 346 residues long: Phenylalanine--tRNA ligase alpha subunit (346 aa).

Residue E261 coordinates Mg(2+).

It belongs to the class-II aminoacyl-tRNA synthetase family. Phe-tRNA synthetase alpha subunit type 1 subfamily. As to quaternary structure, tetramer of two alpha and two beta subunits. The cofactor is Mg(2+).

The protein resides in the cytoplasm. It carries out the reaction tRNA(Phe) + L-phenylalanine + ATP = L-phenylalanyl-tRNA(Phe) + AMP + diphosphate + H(+). The polypeptide is Phenylalanine--tRNA ligase alpha subunit (Streptococcus agalactiae serotype III (strain NEM316)).